Reading from the N-terminus, the 508-residue chain is Putative POTE ankyrin domain family member M (508 aa).

ANK repeat units lie at residues glutamine 172–isoleucine 201, lysine 205–isoleucine 234, tyrosine 238–serine 267, histidine 271–alanine 300, and tyrosine 304–serine 333. The tract at residues serine 369–glycine 487 is disordered. Composition is skewed to basic and acidic residues over residues glutamine 377–glycine 392 and glutamate 406–lysine 421. Positions threonine 476 to glycine 487 are enriched in polar residues.

It belongs to the POTE family.

The polypeptide is Putative POTE ankyrin domain family member M (POTEM) (Homo sapiens (Human)).